Here is a 168-residue protein sequence, read N- to C-terminus: MAEAFRGEYNQKVDAKARVSIPAPFRRVIEAGDPKFSGGRSSFVLVYGGDRSYVECYTISEMERIEERIRSLPMGTPKRRYLERNMITLALNMELDEDGRIVLPPKGREKLGISPDELKGGTEATFAGTLNKFQIWKADIYAAELAAEEEVLLPPGADMLSLLEETGL.

SpoVT-AbrB domains are found at residues 8-51 (EYNQ…GGDR) and 90-140 (ALNM…KADI).

Belongs to the MraZ family. Forms oligomers.

It localises to the cytoplasm. Its subcellular location is the nucleoid. The chain is Transcriptional regulator MraZ from Cereibacter sphaeroides (strain KD131 / KCTC 12085) (Rhodobacter sphaeroides).